Here is a 249-residue protein sequence, read N- to C-terminus: ATP synthase subunit a, chloroplastic (249 aa).

A run of 5 helical transmembrane segments spans residues Q40–V60, V97–L117, I136–S156, L201–L221, and G222–G242.

The protein belongs to the ATPase A chain family. F-type ATPases have 2 components, CF(1) - the catalytic core - and CF(0) - the membrane proton channel. CF(1) has five subunits: alpha(3), beta(3), gamma(1), delta(1), epsilon(1). CF(0) has four main subunits: a, b, b' and c.

Its subcellular location is the plastid. The protein resides in the chloroplast thylakoid membrane. Its function is as follows. Key component of the proton channel; it plays a direct role in the translocation of protons across the membrane. This Draba nemorosa (Woodland whitlowgrass) protein is ATP synthase subunit a, chloroplastic.